We begin with the raw amino-acid sequence, 1178 residues long: Tricalbin-2 (1178 aa).

Positions 1–17 are enriched in polar residues; it reads MSPNSSKTRTDQISSMP. Residues 1–27 are disordered; that stretch reads MSPNSSKTRTDQISSMPGINEATKVES. Residues 1 to 98 are Cytoplasmic-facing; sequence MSPNSSKTRT…NLLPDKFYGD (98 aa). The helical transmembrane segment at 99–119 threads the bilayer; it reads WYHEVAILIIAGLCSFVLGYF. A topological domain (extracellular) is located at residue Lys-120. Residues 121–141 traverse the membrane as a helical segment; that stretch reads FSLASVLIVMLTTGMLYRTSS. The Cytoplasmic segment spans residues 142–1178; it reads KKYRESLRDL…TGDKKSEEKQ (1037 aa). The region spanning 164-367 is the SMP-LTD domain; the sequence is DYESVEWLNT…PPFSLQLNIP (204 aa). C2 domains lie at 358-481, 504-628, and 632-749; these read PPFS…EKVH, PKKL…LKVT, and RPVD…DKYT. Residues 784 to 821 adopt a coiled-coil conformation; sequence LSLEEAKEVDEINEKKDKLEKQKSTLDDKNISKEEKER. Residues 962 to 1086 form the C2 4 domain; sequence QVSWFPVTAT…DPESDTTFNI (125 aa). The residue at position 991 (Ser-991) is a Phosphoserine.

It belongs to the tricalbin family. As to quaternary structure, interacts with TCB1 and TCB3 via its C-terminal domain.

The protein localises to the cell membrane. The protein resides in the endoplasmic reticulum membrane. Its function is as follows. May play a role in membrane trafficking. The polypeptide is Tricalbin-2 (TCB2) (Saccharomyces cerevisiae (strain ATCC 204508 / S288c) (Baker's yeast)).